Here is an 892-residue protein sequence, read N- to C-terminus: Translation initiation factor IF-2 (892 aa).

2 stretches are compositionally biased toward basic and acidic residues: residues 93–159 (VKRD…KDKV) and 166–216 (DMTK…EENK). The segment at 93-304 (VKRDPQEAER…SSLQQGFQKP (212 aa)) is disordered. Residues 254–269 (GRGRNAKAARPAKKGK) show a composition bias toward basic residues. A compositionally biased stretch (basic and acidic residues) spans 270 to 282 (HAESKADREEARA). The tr-type G domain occupies 391–560 (PRAPVVTIMG…LLQAEVLELK (170 aa)). The G1 stretch occupies residues 400–407 (GHVDHGKT). Residue 400–407 (GHVDHGKT) coordinates GTP. The G2 stretch occupies residues 425–429 (GITQH). The G3 stretch occupies residues 446 to 449 (DTPG). Residues 446-450 (DTPGH) and 500-503 (NKID) contribute to the GTP site. Residues 500–503 (NKID) form a G4 region. Residues 536 to 538 (SAK) are G5.

This sequence belongs to the TRAFAC class translation factor GTPase superfamily. Classic translation factor GTPase family. IF-2 subfamily.

Its subcellular location is the cytoplasm. One of the essential components for the initiation of protein synthesis. Protects formylmethionyl-tRNA from spontaneous hydrolysis and promotes its binding to the 30S ribosomal subunits. Also involved in the hydrolysis of GTP during the formation of the 70S ribosomal complex. This chain is Translation initiation factor IF-2, found in Salmonella gallinarum (strain 287/91 / NCTC 13346).